The sequence spans 341 residues: Malate dehydrogenase 2, mitochondrial (341 aa).

A mitochondrion-targeting transit peptide spans 1 to 22; that stretch reads MFRSMIVRSASPVKQGLLRRGF. NAD(+)-binding positions include 36-42 and aspartate 62; that span reads GAAGGIG. Positions 109 and 115 each coordinate substrate. NAD(+) is bound by residues asparagine 122 and 145–147; that span reads ISN. The substrate site is built by asparagine 147 and arginine 181. The Proton acceptor role is filled by histidine 205. Residue methionine 256 participates in NAD(+) binding.

The protein belongs to the LDH/MDH superfamily. MDH type 1 family. Homodimer. As to expression, expressed in rosette leaves at low levels.

It localises to the mitochondrion matrix. It catalyses the reaction (S)-malate + NAD(+) = oxaloacetate + NADH + H(+). In terms of biological role, catalyzes a reversible NAD-dependent dehydrogenase reaction involved in central metabolism and redox homeostasis between organelle compartments. Required for carbon dioxide and energy partitioning in leaves. May limit photorespiration during the dark phase. Can convert 2-ketoglutarate to L-2-hydroxyglutarate in vitro. The sequence is that of Malate dehydrogenase 2, mitochondrial from Arabidopsis thaliana (Mouse-ear cress).